We begin with the raw amino-acid sequence, 427 residues long: Trigger factor (427 aa).

Residues 163-248 form the PPIase FKBP-type domain; it reads GDTVVIDFVG…VNEVKAKELP (86 aa).

It belongs to the FKBP-type PPIase family. Tig subfamily.

The protein resides in the cytoplasm. The enzyme catalyses [protein]-peptidylproline (omega=180) = [protein]-peptidylproline (omega=0). In terms of biological role, involved in protein export. Acts as a chaperone by maintaining the newly synthesized protein in an open conformation. Functions as a peptidyl-prolyl cis-trans isomerase. In Lactococcus lactis subsp. cremoris (strain SK11), this protein is Trigger factor.